A 282-amino-acid chain; its full sequence is Large ribosomal subunit protein uL2 (282 aa).

2 disordered regions span residues 31-56 (EKSLLDSQSHSAGRNNAGKMTVRHRG) and 226-282 (SVMN…GSKM). Polar residues predominate over residues 35–44 (LDSQSHSAGR). Over residues 257 to 266 (TVGKKTRSKK) the composition is skewed to basic residues.

The protein belongs to the universal ribosomal protein uL2 family. As to quaternary structure, part of the 50S ribosomal subunit. Forms a bridge to the 30S subunit in the 70S ribosome.

Functionally, one of the primary rRNA binding proteins. Required for association of the 30S and 50S subunits to form the 70S ribosome, for tRNA binding and peptide bond formation. It has been suggested to have peptidyltransferase activity; this is somewhat controversial. Makes several contacts with the 16S rRNA in the 70S ribosome. In Levilactobacillus brevis (strain ATCC 367 / BCRC 12310 / CIP 105137 / JCM 1170 / LMG 11437 / NCIMB 947 / NCTC 947) (Lactobacillus brevis), this protein is Large ribosomal subunit protein uL2.